Here is a 316-residue protein sequence, read N- to C-terminus: Spermidine synthase (316 aa).

A PABS domain is found at 25–262 (PGWFSEISPM…GVIGFMLCST (238 aa)). Glutamine 56 contributes to the S-adenosyl 3-(methylsulfanyl)propylamine binding site. Tyrosine 86 serves as a coordination point for putrescine. S-adenosyl 3-(methylsulfanyl)propylamine is bound by residues glutamine 87, aspartate 111, glutamate 131, 162-163 (DG), and aspartate 181. The active-site Proton acceptor is aspartate 181. Putrescine contacts are provided by residues 181–184 (DSSD) and tyrosine 250.

Belongs to the spermidine/spermine synthase family.

It carries out the reaction S-adenosyl 3-(methylsulfanyl)propylamine + putrescine = S-methyl-5'-thioadenosine + spermidine + H(+). The protein operates within amine and polyamine biosynthesis; spermidine biosynthesis; spermidine from putrescine: step 1/1. The protein is Spermidine synthase of Coffea arabica (Arabian coffee).